Consider the following 193-residue polypeptide: Xanthine phosphoribosyltransferase (193 aa).

Residues leucine 20 and threonine 27 each coordinate xanthine. 128-132 contacts 5-phospho-alpha-D-ribose 1-diphosphate; that stretch reads ANGQA. A xanthine-binding site is contributed by lysine 156.

This sequence belongs to the purine/pyrimidine phosphoribosyltransferase family. Xpt subfamily. As to quaternary structure, homodimer.

It localises to the cytoplasm. The enzyme catalyses XMP + diphosphate = xanthine + 5-phospho-alpha-D-ribose 1-diphosphate. Its pathway is purine metabolism; XMP biosynthesis via salvage pathway; XMP from xanthine: step 1/1. Converts the preformed base xanthine, a product of nucleic acid breakdown, to xanthosine 5'-monophosphate (XMP), so it can be reused for RNA or DNA synthesis. This chain is Xanthine phosphoribosyltransferase, found in Streptococcus pneumoniae serotype 4 (strain ATCC BAA-334 / TIGR4).